Here is a 409-residue protein sequence, read N- to C-terminus: Elongation factor Tu (409 aa).

One can recognise a tr-type G domain in the interval 10–214; it reads KPHVNVGTIG…AVDSYIPTPE (205 aa). Residues 19–26 form a G1 region; it reads GHVDHGKT. Residue 19–26 participates in GTP binding; that stretch reads GHVDHGKT. Threonine 26 is a binding site for Mg(2+). A G2 region spans residues 60–64; that stretch reads GITIN. The tract at residues 81–84 is G3; sequence DCPG. GTP is bound by residues 81 to 85 and 136 to 139; these read DCPGH and NKVD. The segment at 136-139 is G4; that stretch reads NKVD. Positions 174–176 are G5; it reads SAL.

The protein belongs to the TRAFAC class translation factor GTPase superfamily. Classic translation factor GTPase family. EF-Tu/EF-1A subfamily. As to quaternary structure, monomer.

It localises to the cytoplasm. It catalyses the reaction GTP + H2O = GDP + phosphate + H(+). Functionally, GTP hydrolase that promotes the GTP-dependent binding of aminoacyl-tRNA to the A-site of ribosomes during protein biosynthesis. The protein is Elongation factor Tu of Synechococcus sp. (strain JA-3-3Ab) (Cyanobacteria bacterium Yellowstone A-Prime).